Here is a 391-residue protein sequence, read N- to C-terminus: Thioredoxin-interacting protein (391 aa).

K212 participates in a covalent cross-link: Glycyl lysine isopeptide (Lys-Gly) (interchain with G-Cter in ubiquitin). Residue S361 is modified to Phosphoserine.

It belongs to the arrestin family. Homodimer; disulfide-linked. Interacts with TXN/thioredoxin through its redox-active site. Interacts with transcriptional repressors ZBTB16, ZBTB32 and HDAC1. Interacts with DDIT4. In terms of processing, ubiquitinated; undergoes heterotypic 'Lys-48'-/'Lys-63'-branched polyubiquitination catalyzed by ITCH and UBR5 resulting in proteasomal degradation. Deubiquitinated by USP5, leading to TXNIP stabilization.

Its subcellular location is the cytoplasm. Functionally, may act as an oxidative stress mediator by inhibiting thioredoxin activity or by limiting its bioavailability. Interacts with COPS5 and restores COPS5-induced suppression of CDKN1B stability, blocking the COPS5-mediated translocation of CDKN1B from the nucleus to the cytoplasm. Functions as a transcriptional repressor, possibly by acting as a bridge molecule between transcription factors and corepressor complexes, and over-expression will induce G0/G1 cell cycle arrest. Required for the maturation of natural killer cells. Acts as a suppressor of tumor cell growth. Inhibits the proteasomal degradation of DDIT4, and thereby contributes to the inhibition of the mammalian target of rapamycin complex 1 (mTORC1). The chain is Thioredoxin-interacting protein (TXNIP) from Pongo abelii (Sumatran orangutan).